A 416-amino-acid polypeptide reads, in one-letter code: Histidine--tRNA ligase (416 aa).

The protein belongs to the class-II aminoacyl-tRNA synthetase family.

The protein localises to the cytoplasm. It carries out the reaction tRNA(His) + L-histidine + ATP = L-histidyl-tRNA(His) + AMP + diphosphate + H(+). The sequence is that of Histidine--tRNA ligase from Methanococcus maripaludis (strain DSM 14266 / JCM 13030 / NBRC 101832 / S2 / LL).